The sequence spans 261 residues: Cytochrome c oxidase subunit 3 (261 aa).

Residues 1–15 (MTHQTHAYHMVNPSP) lie on the Mitochondrial matrix side of the membrane. Residues 16–34 (WPLTGALSALLMTSGLIMW) traverse the membrane as a helical segment. Residues 35-40 (FHFNST) are Mitochondrial intermembrane-facing. Residues 41–66 (ALLTLGLTTNMLTMYQWWRDVIREST) traverse the membrane as a helical segment. Residues 67–72 (FQGHHT) are Mitochondrial matrix-facing. A helical transmembrane segment spans residues 73-105 (PAVQKGLRYGMILFIISEVLFFTGFFWAFYHSS). At 106–128 (LAPTPELGGCWPPTGIHPLNPLE) the chain is on the mitochondrial intermembrane side. Residues 129 to 152 (VPLLNTSVLLASGVSITWAHHSLM) form a helical membrane-spanning segment. At 153–155 (EGN) the chain is on the mitochondrial matrix side. A helical transmembrane segment spans residues 156–183 (RYHMLQALFITIALGVYFTLLQASEYYE). Over 184-190 (APFTISD) the chain is Mitochondrial intermembrane. The helical transmembrane segment at 191-223 (GVYGSTFFVATGFHGLHVIIGSTFLIVCFFRQL) threads the bilayer. Topologically, residues 224–232 (KFHFTSSHH) are mitochondrial matrix. The chain crosses the membrane as a helical span at residues 233-256 (FGFEAAAWYWHFVDVVWLFLYMSI). The Mitochondrial intermembrane segment spans residues 257–261 (YWWGS).

This sequence belongs to the cytochrome c oxidase subunit 3 family. In terms of assembly, component of the cytochrome c oxidase (complex IV, CIV), a multisubunit enzyme composed of 14 subunits. The complex is composed of a catalytic core of 3 subunits MT-CO1, MT-CO2 and MT-CO3, encoded in the mitochondrial DNA, and 11 supernumerary subunits COX4I, COX5A, COX5B, COX6A, COX6B, COX6C, COX7A, COX7B, COX7C, COX8 and NDUFA4, which are encoded in the nuclear genome. The complex exists as a monomer or a dimer and forms supercomplexes (SCs) in the inner mitochondrial membrane with NADH-ubiquinone oxidoreductase (complex I, CI) and ubiquinol-cytochrome c oxidoreductase (cytochrome b-c1 complex, complex III, CIII), resulting in different assemblies (supercomplex SCI(1)III(2)IV(1) and megacomplex MCI(2)III(2)IV(2)).

It localises to the mitochondrion inner membrane. It catalyses the reaction 4 Fe(II)-[cytochrome c] + O2 + 8 H(+)(in) = 4 Fe(III)-[cytochrome c] + 2 H2O + 4 H(+)(out). In terms of biological role, component of the cytochrome c oxidase, the last enzyme in the mitochondrial electron transport chain which drives oxidative phosphorylation. The respiratory chain contains 3 multisubunit complexes succinate dehydrogenase (complex II, CII), ubiquinol-cytochrome c oxidoreductase (cytochrome b-c1 complex, complex III, CIII) and cytochrome c oxidase (complex IV, CIV), that cooperate to transfer electrons derived from NADH and succinate to molecular oxygen, creating an electrochemical gradient over the inner membrane that drives transmembrane transport and the ATP synthase. Cytochrome c oxidase is the component of the respiratory chain that catalyzes the reduction of oxygen to water. Electrons originating from reduced cytochrome c in the intermembrane space (IMS) are transferred via the dinuclear copper A center (CU(A)) of subunit 2 and heme A of subunit 1 to the active site in subunit 1, a binuclear center (BNC) formed by heme A3 and copper B (CU(B)). The BNC reduces molecular oxygen to 2 water molecules using 4 electrons from cytochrome c in the IMS and 4 protons from the mitochondrial matrix. In Ovis aries (Sheep), this protein is Cytochrome c oxidase subunit 3 (MT-CO3).